We begin with the raw amino-acid sequence, 246 residues long: Large ribosomal subunit protein uL30-like 1 (246 aa).

S54 is subject to Phosphoserine.

It belongs to the universal ribosomal protein uL30 family.

The sequence is that of Large ribosomal subunit protein uL30-like 1 (Rpl7l1) from Mus musculus (Mouse).